The chain runs to 500 residues: NAD(P)H-quinone oxidoreductase chain 4, chloroplastic (500 aa).

Transmembrane regions (helical) follow at residues 4–24, 37–57, 87–107, 111–131, 134–154, 167–187, 208–228, 242–262, 272–292, 305–325, 330–350, 386–406, 416–436, and 462–482; these read FPWLTIIVVFPILTGSLIFLL, LCICILELLLTTYTFCYHFQL, IGPILLTGFITTLATLAAWPV, AQLFHFLMLAMYSGQIGSFSS, LLLFFLMWEFELIPVYLLLSM, FILYTAGGSIFLLIGVLGIGL, ALEVIFYVGFLIAFAVKLPII, HYSTCMLLAGILLKMGAYGLV, AHCLFSPGLIIVGAIQIIYAA, IAYSSISHMGFIIIGIGSLSD, GAILQIISHGFIGAALFFLAG, LALPGLSGFVAELLVFFGIIT, ILIAFLMAIGMILTPIYSLSM, and LFVSISLLLPIIGIGIYPDFV.

This sequence belongs to the complex I subunit 4 family.

The protein resides in the plastid. It localises to the chloroplast thylakoid membrane. It catalyses the reaction a plastoquinone + NADH + (n+1) H(+)(in) = a plastoquinol + NAD(+) + n H(+)(out). The catalysed reaction is a plastoquinone + NADPH + (n+1) H(+)(in) = a plastoquinol + NADP(+) + n H(+)(out). The protein is NAD(P)H-quinone oxidoreductase chain 4, chloroplastic of Oenothera parviflora (Small-flowered evening primrose).